Consider the following 244-residue polypeptide: MVELPFQQSQALNVRQNRALALAGVFQATQLTHMTAMTGQQSIGESGNFYFELLIKASLNIRPTTNNNAVQTLDFFNQLADISLGLKTLENCITQPFTNAPKSRLPKMRSAKLPMSYAMSLLQLEKKVYSNPEYVAIIEKAQQKILKQLSFFDNNYLHPSILANLAQTYVDTAGQINPRILVRGNAEAFKDTNHTNRIRACLFTGLQMAHLWRQLGGSSWNMIFSKRKLLQDIQALARLQYQVI.

This sequence belongs to the HflD family.

It is found in the cytoplasm. It localises to the cell inner membrane. The polypeptide is High frequency lysogenization protein HflD homolog (Acinetobacter baumannii (strain SDF)).